The primary structure comprises 399 residues: 1-deoxy-D-xylulose 5-phosphate reductoisomerase (399 aa).

The NADPH site is built by Thr-13, Gly-14, Ser-15, Ile-16, and Asn-127. Lys-128 contacts 1-deoxy-D-xylulose 5-phosphate. Glu-129 provides a ligand contact to NADPH. Asp-153 is a Mn(2+) binding site. The 1-deoxy-D-xylulose 5-phosphate site is built by Ser-154, Glu-155, Ser-187, and His-210. Mn(2+) is bound at residue Glu-155. Gly-216 contributes to the NADPH binding site. 1-deoxy-D-xylulose 5-phosphate contacts are provided by Ser-223, Asn-228, Lys-229, and Glu-232. Position 232 (Glu-232) interacts with Mn(2+).

Belongs to the DXR family. Requires Mg(2+) as cofactor. It depends on Mn(2+) as a cofactor.

It carries out the reaction 2-C-methyl-D-erythritol 4-phosphate + NADP(+) = 1-deoxy-D-xylulose 5-phosphate + NADPH + H(+). Its pathway is isoprenoid biosynthesis; isopentenyl diphosphate biosynthesis via DXP pathway; isopentenyl diphosphate from 1-deoxy-D-xylulose 5-phosphate: step 1/6. In terms of biological role, catalyzes the NADPH-dependent rearrangement and reduction of 1-deoxy-D-xylulose-5-phosphate (DXP) to 2-C-methyl-D-erythritol 4-phosphate (MEP). This is 1-deoxy-D-xylulose 5-phosphate reductoisomerase from Bordetella parapertussis (strain 12822 / ATCC BAA-587 / NCTC 13253).